The primary structure comprises 122 residues: Large ribosomal subunit protein uL14c (122 aa).

The protein belongs to the universal ribosomal protein uL14 family. As to quaternary structure, part of the 50S ribosomal subunit.

It is found in the plastid. The protein resides in the chloroplast. Functionally, binds to 23S rRNA. This chain is Large ribosomal subunit protein uL14c, found in Pleurastrum terricola (Filamentous green alga).